A 108-amino-acid polypeptide reads, in one-letter code: Somatoliberin (108 aa).

The N-terminal stretch at 1-20 (MPLWVFFFVILTLSNSSHCS) is a signal peptide. Residues 21–31 (PPPPLTLRMRR) constitute a propeptide that is removed on maturation. Leu75 bears the Leucine amide mark. Residues 78 to 108 (QVDSMWAEQKQMELESILVALLQKHSRNSQG) constitute a propeptide that is removed on maturation.

This sequence belongs to the glucagon family.

Its subcellular location is the secreted. GRF is released by the hypothalamus and acts on the adenohypophyse to stimulate the secretion of growth hormone. This Homo sapiens (Human) protein is Somatoliberin (GHRH).